The following is a 129-amino-acid chain: Small ribosomal subunit protein uS11 (129 aa).

It belongs to the universal ribosomal protein uS11 family. As to quaternary structure, part of the 30S ribosomal subunit. Interacts with proteins S7 and S18. Binds to IF-3.

Its function is as follows. Located on the platform of the 30S subunit, it bridges several disparate RNA helices of the 16S rRNA. Forms part of the Shine-Dalgarno cleft in the 70S ribosome. This chain is Small ribosomal subunit protein uS11, found in Caulobacter sp. (strain K31).